The primary structure comprises 246 residues: Exosome complex component Rrp41 (246 aa).

It belongs to the RNase PH family. Rrp41 subfamily. As to quaternary structure, component of the archaeal exosome complex. Forms a hexameric ring-like arrangement composed of 3 Rrp41-Rrp42 heterodimers. The hexameric ring associates with a trimer of Rrp4 and/or Csl4 subunits.

Its subcellular location is the cytoplasm. Catalytic component of the exosome, which is a complex involved in RNA degradation. Has 3'-&gt;5' exoribonuclease activity. Can also synthesize heteromeric RNA-tails. The sequence is that of Exosome complex component Rrp41 from Pyrobaculum neutrophilum (strain DSM 2338 / JCM 9278 / NBRC 100436 / V24Sta) (Thermoproteus neutrophilus).